A 374-amino-acid polypeptide reads, in one-letter code: N-acetyldiaminopimelate deacetylase (374 aa).

The active site involves Asp-69. Residue Glu-128 is the Proton acceptor of the active site.

This sequence belongs to the peptidase M20A family. N-acetyldiaminopimelate deacetylase subfamily.

The catalysed reaction is N-acetyl-(2S,6S)-2,6-diaminopimelate + H2O = (2S,6S)-2,6-diaminopimelate + acetate. It participates in amino-acid biosynthesis; L-lysine biosynthesis via DAP pathway; LL-2,6-diaminopimelate from (S)-tetrahydrodipicolinate (acetylase route): step 3/3. Catalyzes the conversion of N-acetyl-diaminopimelate to diaminopimelate and acetate. The protein is N-acetyldiaminopimelate deacetylase of Bacillus licheniformis (strain ATCC 14580 / DSM 13 / JCM 2505 / CCUG 7422 / NBRC 12200 / NCIMB 9375 / NCTC 10341 / NRRL NRS-1264 / Gibson 46).